A 1791-amino-acid polypeptide reads, in one-letter code: Brefeldin A-inhibited guanine nucleotide-exchange protein 2 (1791 aa).

Met1 carries the post-translational modification N-acetylmethionine. Residues Gln2–Thr224 form a DCB; DCB:DCB domain and DCB:HUS domain interaction region. 2 disordered regions span residues Leu208–Ala292 and Ala311–Asp350. 3 positions are modified to phosphoserine: Ser214, Ser218, and Ser227. Polar residues predominate over residues Ser214 to Ala225. Residues Leu233–Thr243 are compositionally biased toward polar residues. Thr244 is subject to Phosphothreonine. Residues Thr244–Arg257 show a composition bias toward basic and acidic residues. Residue Ser277 is modified to Phosphoserine. Ser355 and Ser356 each carry phosphoserine. Positions Ala515 to Asn535 are HUS; DCB:HUS domain interaction. Ser621 bears the Phosphoserine mark. A Phosphothreonine modification is found at Thr623. Ser624 carries the phosphoserine modification. A Phosphothreonine modification is found at Thr633. Positions Phe661–Ser792 constitute an SEC7 domain. Residues Ser707, Ser1518, Ser1520, Ser1521, Ser1532, Ser1535, Ser1541, and Ser1788 each carry the phosphoserine modification.

Homodimer. Interacts with ARFGEF1/BIG1; both proteins are probably part of the same or very similar macromolecular complexes. Interacts with PRKAR1A, PRKAR2A, PRKAR1B, PRKAR2B, PPP1CC, PDE3A, TNFRSF1A, MYCBP and EXOC7. Interacts with GABRB1, GABRB2 and GABRB3. In terms of processing, in vitro phosphorylated by PKA reducing its GEF activity and dephosphorylated by phosphatase PP1. Expressed in brain (at protein level).

It is found in the cytoplasm. The protein localises to the membrane. Its subcellular location is the golgi apparatus. The protein resides in the perinuclear region. It localises to the trans-Golgi network. It is found in the endosome. The protein localises to the cytoskeleton. Its subcellular location is the microtubule organizing center. The protein resides in the centrosome. It localises to the cell projection. It is found in the dendrite. The protein localises to the cytoplasmic vesicle. Its subcellular location is the synapse. Inhibited by brefeldin A. Functionally, promotes guanine-nucleotide exchange on ARF1 and ARF3 and to a lower extent on ARF5 and ARF6. Promotes the activation of ARF1/ARF5/ARF6 through replacement of GDP with GTP. Involved in the regulation of Golgi vesicular transport. Required for the integrity of the endosomal compartment. Involved in trafficking from the trans-Golgi network (TGN) to endosomes and is required for membrane association of the AP-1 complex and GGA1. Seems to be involved in recycling of the transferrin receptor from recycling endosomes to the plasma membrane. Probably is involved in the exit of GABA(A) receptors from the endoplasmic reticulum. Involved in constitutive release of tumor necrosis factor receptor 1 via exosome-like vesicles; the function seems to involve PKA and specifically PRKAR2B. Proposed to act as A kinase-anchoring protein (AKAP) and may mediate crosstalk between Arf and PKA pathways. The polypeptide is Brefeldin A-inhibited guanine nucleotide-exchange protein 2 (Arfgef2) (Rattus norvegicus (Rat)).